Here is a 1058-residue protein sequence, read N- to C-terminus: Kinesin-like protein KIN-5D (1058 aa).

Residues 1–43 (MDSIQQRRGGIVSLSPAQTPRSSDKSARESRSSESNSTNRNDK) are disordered. Over residues 22–32 (SSDKSARESRS) the composition is skewed to basic and acidic residues. A Kinesin motor domain is found at 48-390 (NVQVILRCRP…LDYAHRAKNI (343 aa)). An ATP-binding site is contributed by 134–141 (GQTGTGKT). Positions 438-517 (QEEAEKKAMA…QANATIKEKE (80 aa)) form a coiled coil.

This sequence belongs to the TRAFAC class myosin-kinesin ATPase superfamily. Kinesin family. KIN-5/BimC subfamily.

It is found in the cytoplasm. The protein localises to the cytoskeleton. The protein resides in the spindle. In terms of biological role, responsible for microtubule translocation. May be important for the organization of phragmoplast-specific arrays of microtubules. Plays an essential role in stabilizing the mitotic spindle. Required during mitotic cytokinesis. The chain is Kinesin-like protein KIN-5D from Arabidopsis thaliana (Mouse-ear cress).